A 131-amino-acid polypeptide reads, in one-letter code: Monothiol glutaredoxin-S6 (131 aa).

Residues 31 to 131 (SAFVQNAIYS…KLLGNSQSQR (101 aa)) enclose the Glutaredoxin domain. C51 is a [2Fe-2S] cluster binding site.

The protein belongs to the glutaredoxin family. CPYC subfamily.

It localises to the cytoplasm. Functionally, may only reduce GSH-thiol disulfides, but not protein disulfides. The sequence is that of Monothiol glutaredoxin-S6 (GRXS6) from Oryza sativa subsp. japonica (Rice).